The chain runs to 313 residues: Ribosomal RNA small subunit methyltransferase H (313 aa).

S-adenosyl-L-methionine contacts are provided by residues 35 to 37 (GGH), Asp-55, Phe-80, Asp-102, and Gln-109.

Belongs to the methyltransferase superfamily. RsmH family.

The protein resides in the cytoplasm. It catalyses the reaction cytidine(1402) in 16S rRNA + S-adenosyl-L-methionine = N(4)-methylcytidine(1402) in 16S rRNA + S-adenosyl-L-homocysteine + H(+). In terms of biological role, specifically methylates the N4 position of cytidine in position 1402 (C1402) of 16S rRNA. This Shewanella loihica (strain ATCC BAA-1088 / PV-4) protein is Ribosomal RNA small subunit methyltransferase H.